Here is a 341-residue protein sequence, read N- to C-terminus: G2/mitotic-specific cyclin C13-1 (341 aa).

Belongs to the cyclin family. Cyclin AB subfamily.

Functionally, essential for the control of the cell cycle at the G2/M (mitosis) transition. Interacts with the CDC2 and CDK2 protein kinases to form MPF. G2/M cyclins accumulate steadily during G2 and are abruptly destroyed at mitosis. This chain is G2/mitotic-specific cyclin C13-1, found in Daucus carota (Wild carrot).